Reading from the N-terminus, the 498-residue chain is MRINPTTSGPGVSTLEKKNLGRIAQIIGPVLDVAFPPGKMPNIYNALVVKGRDTVGQQINVTCEVQQLLGNNRVRAVAMSATDGLMRGMEVIDTGAPLSVPVGGATLGRIFNVLGEPVDNLGPVDTRTTSPIHRSAPAFIQLDTKLSIFETGIKVVDLLAPYRRGGKIGLFGGAGVGKTVLIMELINNIAKAHGGVSVFGGVGERTREGNDLYMEMKESGVINEQNIAESKVALVHGQMNEPPGARMRVGLTALTMAEYFRDVNEQDVLLFIDNIFRFVQAGSEVSALLGRMPSAVGYQPTLSTEMGSLQERITSTKEGSITSIQAVYVPADDLTDPAPATTFAHLDATTVLSRGLAAKGIYPAVDPLDSTSTMLQPRIVGEEHYETAQRVKQTSQRYKELQDIIAILGLDELSEEDRLTVARARKIERFLSQPFFVAEVFTGSPGKYVGLTETIRGFQLILSGELDGLPEQAFYLVGNIDEATAKAMNLEVESNLKK.

Gly-172–Thr-179 contacts ATP.

It belongs to the ATPase alpha/beta chains family. In terms of assembly, F-type ATPases have 2 components, CF(1) - the catalytic core - and CF(0) - the membrane proton channel. CF(1) has five subunits: alpha(3), beta(3), gamma(1), delta(1), epsilon(1). CF(0) has four main subunits: a(1), b(1), b'(1) and c(9-12).

It localises to the plastid. Its subcellular location is the chloroplast thylakoid membrane. The enzyme catalyses ATP + H2O + 4 H(+)(in) = ADP + phosphate + 5 H(+)(out). Functionally, produces ATP from ADP in the presence of a proton gradient across the membrane. The catalytic sites are hosted primarily by the beta subunits. The sequence is that of ATP synthase subunit beta, chloroplastic from Cinnamomum camphora (Camphor tree).